The chain runs to 448 residues: Bifunctional F420 biosynthesis protein FbiB (448 aa).

The segment at 1-244 is coenzyme F420:L-glutamate ligase; sequence MTGPEHGSAS…PGANDLFWLG (244 aa). GTP-binding positions include 20–23, Ser-50, and Lys-55; that span reads LPEF. Asp-109 contacts a divalent metal cation. Asn-112 serves as a coordination point for GTP. Positions 150 and 151 each coordinate a divalent metal cation. Residues 245–448 are dehydro-coenzyme F420-0 reductase; that stretch reads TAEALELGRQ…VPAADLLILK (204 aa). FMN contacts are provided by residues 260–264 and Ala-288; that span reads RRSVR. Asp-320 lines the coenzyme F420-(gamma-Glu)n pocket. Residues Gly-399 and Arg-436 each contribute to the FMN site.

This sequence in the N-terminal section; belongs to the CofE family. Mg(2+) is required as a cofactor. Mn(2+) serves as cofactor. Requires K(+) as cofactor.

The catalysed reaction is oxidized coenzyme F420-0 + GTP + L-glutamate = oxidized coenzyme F420-1 + GDP + phosphate + H(+). It catalyses the reaction oxidized coenzyme F420-1 + GTP + L-glutamate = oxidized coenzyme F420-2 + GDP + phosphate + H(+). The enzyme catalyses oxidized coenzyme F420-(gamma-L-Glu)(n) + GTP + L-glutamate = oxidized coenzyme F420-(gamma-L-Glu)(n+1) + GDP + phosphate + H(+). It carries out the reaction oxidized coenzyme F420-0 + FMN + H(+) = dehydro coenzyme F420-0 + FMNH2. It participates in cofactor biosynthesis; coenzyme F420 biosynthesis. Its function is as follows. Bifunctional enzyme that catalyzes the GTP-dependent successive addition of multiple gamma-linked L-glutamates to the L-lactyl phosphodiester of 7,8-didemethyl-8-hydroxy-5-deazariboflavin (F420-0) to form polyglutamated F420 derivatives, and the FMNH2-dependent reduction of dehydro-F420-0 to form F420-0. This chain is Bifunctional F420 biosynthesis protein FbiB, found in Mycobacterium tuberculosis (strain ATCC 25177 / H37Ra).